The primary structure comprises 190 residues: Putative resolvase R771 (190 aa).

Positions 11–30 (SSVLGVHQRTLYQWDKKGWI) form a DNA-binding region, H-T-H motif. Residues 61–190 (LSICYVRVSS…RNGLKKYSNK (130 aa)) enclose the Resolvase/invertase-type recombinase catalytic domain. Residues 66 to 92 (VRVSSNNQKDDLERQIKFMKKKYPNHT) adopt a coiled-coil conformation. Ser-69 serves as the catalytic O-(5'-phospho-DNA)-serine intermediate.

It belongs to the site-specific recombinase resolvase family.

Resolvase catalyzes the resolution (a site-specific recombination) of the cointegrated replicon to yield the final transposition products. In Acanthamoeba polyphaga (Amoeba), this protein is Putative resolvase R771.